The sequence spans 425 residues: MSGDYQLRCPTCGLRITDRYSSFCPAGHPGLLVTDYPERTLSLSGQPGIFRYESWLPVRGRLPFTGGTVTYQSDGLAEELGLAHLFIGFNGYWPERGADLVTCSFKELEAVPSMLRATERTAGILVVASAGNTARAFCQVSALTGIPVVIVVPQSALPRLWTTEPAPAALVIGVDGDYADAIAYSTALAAVDPRLIVEGGARNVARRDGMGTVMLDGAVTIGRIPDHYVQAVGSGTGGVAAYEAASRLIRDGRFGGRLPILHLAQNLPFVPMVAAWEEHTRDLQVGPGTPYTEEAEQWVSAPVLTNRTPPYGVPGGTYDALEATGGEMYAISNGLARAAGTLFTDCEGIDLDPAAAVATASLIQAIEMGTIEPGSRVLLNITGGGYDRVVEDHTLVPTPAGYRVPAGNPDDEIRRDVITWVNDHA.

Residue K106 is modified to N6-(pyridoxal phosphate)lysine. N132 and T382 together coordinate pyridoxal 5'-phosphate.

The protein belongs to the threonine synthase family. Cysteate synthase subfamily. As to quaternary structure, homotrimer. It depends on pyridoxal 5'-phosphate as a cofactor.

The enzyme catalyses O-phospho-L-serine + sulfite + H(+) = L-cysteate + phosphate. Its pathway is cofactor biosynthesis; coenzyme M biosynthesis. Its function is as follows. Specifically catalyzes the beta-elimination of phosphate from L-phosphoserine and the beta-addition of sulfite to the dehydroalanine intermediate to produce L-cysteate. The polypeptide is Cysteate synthase (Methanosphaerula palustris (strain ATCC BAA-1556 / DSM 19958 / E1-9c)).